The sequence spans 271 residues: Gap junction beta-5 protein (271 aa).

Over 1–20 the chain is Cytoplasmic; it reads MNWSVFEGLLSGVNKYSTAF. Residues 21–40 traverse the membrane as a helical segment; sequence GRIWLSLVFVFRVLVYLVTA. The Extracellular segment spans residues 41 to 75; it reads ERVWGDDQKDFDCNTRQPGCTNVCYDEFFPVSHVR. The chain crosses the membrane as a helical span at residues 76 to 98; sequence LWALQLILVTCPSLLVVMHVAYR. The Cytoplasmic portion of the chain corresponds to 99 to 124; that stretch reads KAREKKYQQEVGKGYLYPNPGKKRGG. A helical membrane pass occupies residues 125-147; sequence LWWTYVCSLLFKATIDIIFLYLF. Topologically, residues 148–182 are extracellular; it reads HAFYPRYTLPSMVKCHSAPCPNTVDCFIAKPSEKN. Residues 183–205 form a helical membrane-spanning segment; it reads IFIVFMLVTAIVCILLNLVELLY. At 206–271 the chain is on the cytoplasmic side; the sequence is LVIKRCSECA…PRAHVKKTIL (66 aa). Positions 217-237 are disordered; sequence AKRPPTAHAKNDPNWANPSSK.

This sequence belongs to the connexin family. Beta-type (group I) subfamily. A connexon is composed of a hexamer of connexins. In terms of tissue distribution, expressed in skin.

It is found in the cell membrane. Its subcellular location is the cell junction. The protein localises to the gap junction. In terms of biological role, one gap junction consists of a cluster of closely packed pairs of transmembrane channels, the connexons, through which materials of low MW diffuse from one cell to a neighboring cell. This chain is Gap junction beta-5 protein (Gjb5), found in Rattus norvegicus (Rat).